We begin with the raw amino-acid sequence, 248 residues long: Isopentenyl phosphate kinase (248 aa).

7–11 (KLGGS) contacts ATP. Substrate is bound at residue G49. An ATP-binding site is contributed by G50. H54 and G152 together coordinate substrate. Residues G209 and K213 each contribute to the ATP site.

The protein belongs to the isopentenyl phosphate kinase family. Homodimer.

The catalysed reaction is isopentenyl phosphate + ATP = isopentenyl diphosphate + ADP. In terms of biological role, catalyzes the phosphorylation of isopentenyl phosphate (IP) to isopentenyl diphosphate (IPP). Functions in an alternate mevalonate (MVA) pathway leading to IPP, a key precursor for the biosynthesis of isoprenoid compounds such as archaeal membrane lipids. This is Isopentenyl phosphate kinase from Haloferax volcanii (strain ATCC 29605 / DSM 3757 / JCM 8879 / NBRC 14742 / NCIMB 2012 / VKM B-1768 / DS2) (Halobacterium volcanii).